A 299-amino-acid chain; its full sequence is Apolipoprotein E (299 aa).

The first 18 residues, 1–18 (MKVLCTVLVVTLLAGCQA), serve as a signal peptide directing secretion. An 8 X 22 AA approximate tandem repeats region spans residues 74–245 (VLMEDTMKAV…RLEEVREQME (172 aa)). A run of 8 repeats spans residues 75-95 (LMEDTMKAVKAYKSELEQELV), 96-117 (PMAEDTKARLSKELQAAQARLG), 118-139 (ADMEEVRNRLAQYRSEMQAMLG), 140-161 (QSAEELRARLASHLRKLRKKLL), 162-183 (RDAEDLQKRLAVYKDGASEGAE), 184-206 (RSVSAVRERLESLVEQSRARAAL), 207-225 (TSQPLQERAQAWGKRLRGR), and 224-242 (GRLEEVGSQARDRLEEVRE). Methionine 137 carries the methionine sulfoxide modification. Serine 141 is subject to Phosphoserine. The interval 152-162 (HLRKLRKKLLR) is LDL and other lipoprotein receptors binding. 156 to 159 (LRKK) is a heparin binding site. The interval 205 to 273 (ALTSQPLQER…GWFEPMVEDM (69 aa)) is lipid-binding and lipoprotein association. Position 219-226 (219-226 (GKRLRGRL)) interacts with heparin. A specificity for association with VLDL region spans residues 261–273 (RLKGWFEPMVEDM).

The protein belongs to the apolipoprotein A1/A4/E family. In terms of assembly, homotetramer. May interact with ABCA1; functionally associated with ABCA1 in the biogenesis of HDLs. May interact with APP/A4 amyloid-beta peptide; the interaction is extremely stable in vitro but its physiological significance is unclear. May interact with MAPT. May interact with MAP2. In the cerebrospinal fluid, interacts with secreted SORL1. Interacts with PMEL; this allows the loading of PMEL luminal fragment on ILVs to induce fibril nucleation. APOE exists as multiple glycosylated and sialylated glycoforms within cells and in plasma. The extent of glycosylation and sialylation are tissue and context specific. In terms of processing, glycated in plasma VLDL. Post-translationally, phosphorylated by FAM20C in the extracellular medium.

It localises to the secreted. Its subcellular location is the extracellular space. The protein localises to the extracellular matrix. The protein resides in the extracellular vesicle. It is found in the endosome. It localises to the multivesicular body. Its function is as follows. APOE is an apolipoprotein, a protein associating with lipid particles, that mainly functions in lipoprotein-mediated lipid transport between organs via the plasma and interstitial fluids. APOE is a core component of plasma lipoproteins and is involved in their production, conversion and clearance. Apolipoproteins are amphipathic molecules that interact both with lipids of the lipoprotein particle core and the aqueous environment of the plasma. As such, APOE associates with chylomicrons, chylomicron remnants, very low density lipoproteins (VLDL) and intermediate density lipoproteins (IDL) but shows a preferential binding to high-density lipoproteins (HDL). It also binds a wide range of cellular receptors including the LDL receptor/LDLR, the LDL receptor-related proteins LRP1, LRP2 and LRP8 and the very low-density lipoprotein receptor/VLDLR that mediate the cellular uptake of the APOE-containing lipoprotein particles. Finally, APOE also has a heparin-binding activity and binds heparan-sulfate proteoglycans on the surface of cells, a property that supports the capture and the receptor-mediated uptake of APOE-containing lipoproteins by cells. A main function of APOE is to mediate lipoprotein clearance through the uptake of chylomicrons, VLDLs, and HDLs by hepatocytes. APOE is also involved in the biosynthesis by the liver of VLDLs as well as their uptake by peripheral tissues ensuring the delivery of triglycerides and energy storage in muscle, heart and adipose tissues. By participating in the lipoprotein-mediated distribution of lipids among tissues, APOE plays a critical role in plasma and tissues lipid homeostasis. APOE is also involved in two steps of reverse cholesterol transport, the HDLs-mediated transport of cholesterol from peripheral tissues to the liver, and thereby plays an important role in cholesterol homeostasis. First, it is functionally associated with ABCA1 in the biogenesis of HDLs in tissues. Second, it is enriched in circulating HDLs and mediates their uptake by hepatocytes. APOE also plays an important role in lipid transport in the central nervous system, regulating neuron survival and sprouting. The protein is Apolipoprotein E (APOE) of Ctenomys sociabilis (Social tuco-tuco).